Consider the following 413-residue polypeptide: Serine hydroxymethyltransferase (413 aa).

(6S)-5,6,7,8-tetrahydrofolate-binding positions include leucine 116 and glycine 120 to leucine 122. Position 225 is an N6-(pyridoxal phosphate)lysine (lysine 225). Serine 349–phenylalanine 351 contacts (6S)-5,6,7,8-tetrahydrofolate.

It belongs to the SHMT family. Homodimer. Pyridoxal 5'-phosphate is required as a cofactor.

The protein resides in the cytoplasm. It carries out the reaction (6R)-5,10-methylene-5,6,7,8-tetrahydrofolate + glycine + H2O = (6S)-5,6,7,8-tetrahydrofolate + L-serine. It functions in the pathway one-carbon metabolism; tetrahydrofolate interconversion. The protein operates within amino-acid biosynthesis; glycine biosynthesis; glycine from L-serine: step 1/1. Catalyzes the reversible interconversion of serine and glycine with tetrahydrofolate (THF) serving as the one-carbon carrier. This reaction serves as the major source of one-carbon groups required for the biosynthesis of purines, thymidylate, methionine, and other important biomolecules. Also exhibits THF-independent aldolase activity toward beta-hydroxyamino acids, producing glycine and aldehydes, via a retro-aldol mechanism. This is Serine hydroxymethyltransferase from Levilactobacillus brevis (strain ATCC 367 / BCRC 12310 / CIP 105137 / JCM 1170 / LMG 11437 / NCIMB 947 / NCTC 947) (Lactobacillus brevis).